Reading from the N-terminus, the 358-residue chain is 4-hydroxybenzoate polyprenyltransferase, mitochondrial (358 aa).

The N-terminal 20 residues, 1–20, are a transit peptide targeting the mitochondrion; the sequence is MIIKPIASPARYFLRTPSWS. 7 consecutive transmembrane segments (helical) span residues 76 to 96, 107 to 127, 154 to 174, 202 to 222, 229 to 249, 275 to 295, and 336 to 356; these read TGTYLLYSPCTWSILMAAYAY, LALFGVGSFLMRSAGCVINDL, AISLLSVQLTASLGILLQLNP, VVLGLTFGYGAVMGWPALAGE, VVAPLYLSTISWIVLYDTIYA, VLCGLAALQIATLATAGIMNG, and NTGYLVAAAIALDWLAKSFIY.

It belongs to the UbiA prenyltransferase family. Mg(2+) serves as cofactor.

The protein localises to the mitochondrion. The protein resides in the mitochondrion inner membrane. The catalysed reaction is an all-trans-polyprenyl diphosphate + 4-hydroxybenzoate = a 4-hydroxy-3-(all-trans-polyprenyl)benzoate + diphosphate. It functions in the pathway cofactor biosynthesis; ubiquinone biosynthesis. Its function is as follows. Catalyzes the prenylation of para-hydroxybenzoate (PHB) with an all-trans polyprenyl group. Mediates the second step in the final reaction sequence of coenzyme Q (CoQ) biosynthesis, which is the condensation of the polyisoprenoid side chain with PHB, generating the first membrane-bound Q intermediate. The sequence is that of 4-hydroxybenzoate polyprenyltransferase, mitochondrial from Schizosaccharomyces pombe (strain 972 / ATCC 24843) (Fission yeast).